Consider the following 538-residue polypeptide: Lipid scramblase CLPTM1L (538 aa).

Residues 1–10 (MWSGRSSFTS) are Cytoplasmic-facing. A helical transmembrane segment spans residues 11–31 (LVVGVFVVYVVHTCWVMYGIV). The Extracellular segment spans residues 32 to 284 (YTRPCSGDAN…VKGIFVDTNL (253 aa)). Residues Asn91, Asn101, and Asn229 are each glycosylated (N-linked (GlcNAc...) asparagine). Residues 285–305 (YFLALTFFVAAFHLLFDFLAF) traverse the membrane as a helical segment. Residues 306-324 (KNDISFWKKKKSMIGMSTK) are Cytoplasmic-facing. The chain crosses the membrane as a helical span at residues 325–342 (AVLWRCFSTVVIFLFLLD). The Extracellular portion of the chain corresponds to 343 to 346 (EQTS). The helical transmembrane segment at 347 to 364 (LLVLVPAGVGAAIELWKV) threads the bilayer. At 365 to 402 (KKALKMTIFWRGLMPEFQFGTYSESERKTEEYDTQAMK) the chain is on the cytoplasmic side. The helical transmembrane segment at 403–423 (YLSYLLYPLCVGGAVYSLLNI) threads the bilayer. Topologically, residues 424 to 428 (KYKSW) are extracellular. A helical transmembrane segment spans residues 429 to 449 (YSWLINSFVNGVYAFGFLFML). Over 450–538 (PQLFVNYKLK…EKATRAPHTD (89 aa)) the chain is Cytoplasmic.

Belongs to the CLPTM1 family. Ubiquitously expressed.

It is found in the endoplasmic reticulum membrane. The catalysed reaction is a 6-(alpha-D-glucosaminyl)-1-(1,2-diacyl-sn-glycero-3-phospho)-1D-myo-inositol(in) = a 6-(alpha-D-glucosaminyl)-1-(1,2-diacyl-sn-glycero-3-phospho)-1D-myo-inositol(out). The enzyme catalyses 6-(alpha-D-glucosaminyl)-(1-octadecanoyl,2-(9Z)-octadecenoyl-sn-glycero-3-phospho)-1D-myo-inositol(in) = 6-(alpha-D-glucosaminyl)-(1-octadecanoyl,2-(9Z)-octadecenoyl-sn-glycero-3-phospho)-1D-myo-inositol(out). It carries out the reaction a 1,2-diacyl-sn-glycero-3-phospho-(1D-myo-inositol)(in) = a 1,2-diacyl-sn-glycero-3-phospho-(1D-myo-inositol)(out). It catalyses the reaction a 1,2-diacyl-sn-glycero-3-phosphocholine(in) = a 1,2-diacyl-sn-glycero-3-phosphocholine(out). The catalysed reaction is a 1,2-diacyl-sn-glycero-3-phosphoethanolamine(in) = a 1,2-diacyl-sn-glycero-3-phosphoethanolamine(out). In terms of biological role, scramblase that mediates the translocation of glucosaminylphosphatidylinositol (alpha-D-GlcN-(1-6)-(1,2-diacyl-sn-glycero-3-phospho)-1D-myo-inositol, GlcN-PI) across the endoplasmic reticulum (ER) membrane, from the cytosolic leaflet to the luminal leaflet of the ER membrane, where it participates in the biosynthesis of glycosylphosphatidylinositol (GPI). GPI is a lipid glycoconjugate involved in post-translational modification of proteins. Can also translocate 1,2-diacyl-sn-glycero-3-phospho-(1D-myo-inositol) (phosphatidylinositol or PI), as well as several other phospholipids (1,2-diacyl-sn-glycero-3-phosphocholine, 1,2-diacyl-sn-glycero-3-phosphoethanolamine), and N-acetylglucosaminylphosphatidylinositol (GlcNAc-PI) in vitro. This Homo sapiens (Human) protein is Lipid scramblase CLPTM1L (CLPTM1L).